The following is a 361-amino-acid chain: Chorismate synthase (361 aa).

Positions 48 and 54 each coordinate NADP(+). FMN contacts are provided by residues 125 to 127 (RSS), 238 to 239 (NA), G278, 293 to 297 (KPTSS), and R319.

This sequence belongs to the chorismate synthase family. In terms of assembly, homotetramer. FMNH2 is required as a cofactor.

It catalyses the reaction 5-O-(1-carboxyvinyl)-3-phosphoshikimate = chorismate + phosphate. Its pathway is metabolic intermediate biosynthesis; chorismate biosynthesis; chorismate from D-erythrose 4-phosphate and phosphoenolpyruvate: step 7/7. In terms of biological role, catalyzes the anti-1,4-elimination of the C-3 phosphate and the C-6 proR hydrogen from 5-enolpyruvylshikimate-3-phosphate (EPSP) to yield chorismate, which is the branch point compound that serves as the starting substrate for the three terminal pathways of aromatic amino acid biosynthesis. This reaction introduces a second double bond into the aromatic ring system. The chain is Chorismate synthase from Vibrio campbellii (strain ATCC BAA-1116).